The following is a 317-amino-acid chain: Homoserine O-acetyltransferase (317 aa).

The active-site Acyl-thioester intermediate is the cysteine 142. Residues lysine 163 and serine 192 each coordinate substrate. Residue histidine 235 is the Proton acceptor of the active site. The active site involves glutamate 237. Residue arginine 249 participates in substrate binding.

It belongs to the MetA family.

It is found in the cytoplasm. The catalysed reaction is L-homoserine + acetyl-CoA = O-acetyl-L-homoserine + CoA. The protein operates within amino-acid biosynthesis; L-methionine biosynthesis via de novo pathway; O-acetyl-L-homoserine from L-homoserine: step 1/1. Its function is as follows. Transfers an acetyl group from acetyl-CoA to L-homoserine, forming acetyl-L-homoserine. This Rhizorhabdus wittichii (strain DSM 6014 / CCUG 31198 / JCM 15750 / NBRC 105917 / EY 4224 / RW1) (Sphingomonas wittichii) protein is Homoserine O-acetyltransferase.